Reading from the N-terminus, the 150-residue chain is Deoxyuridine 5'-triphosphate nucleotidohydrolase (150 aa).

Residues 69–71 (RSG), Asn-82, and 86–88 (TID) each bind substrate.

The protein belongs to the dUTPase family. Requires Mg(2+) as cofactor.

It catalyses the reaction dUTP + H2O = dUMP + diphosphate + H(+). Its pathway is pyrimidine metabolism; dUMP biosynthesis; dUMP from dCTP (dUTP route): step 2/2. In terms of biological role, this enzyme is involved in nucleotide metabolism: it produces dUMP, the immediate precursor of thymidine nucleotides and it decreases the intracellular concentration of dUTP so that uracil cannot be incorporated into DNA. The sequence is that of Deoxyuridine 5'-triphosphate nucleotidohydrolase from Syntrophus aciditrophicus (strain SB).